Reading from the N-terminus, the 126-residue chain is Hydrogenase maturation factor HypA (126 aa).

Histidine 2 contacts Ni(2+). 4 residues coordinate Zn(2+): cysteine 78, cysteine 81, cysteine 97, and cysteine 100.

Belongs to the HypA/HybF family.

Involved in the maturation of [NiFe] hydrogenases. Required for nickel insertion into the metal center of the hydrogenase. The chain is Hydrogenase maturation factor HypA from Methanococcus maripaludis (strain C6 / ATCC BAA-1332).